The following is a 324-amino-acid chain: MRSVSEEPVPLHEEFIYCCGAATHVLKCGPWKDLSKDESKNLPRLLFMIIPGNPGLAGYYRTFIKALYCGLNQQYPVWVVSHAGHCKPPSGMEMIEDTDIKELEDVFGLNGQVEHKLNFLKKNVSKDIKLVLIAHSIGCYITLEMMKRASELQVLRSVLLFPTIERMAQSPQGKLMTPLLCKLRYALYMPVYLLSFLPEGVKASLVRFALRGMKTCDESSITTSVNLFSVDCIANILYMASQEMMKVVERDSTTIKQNLKKLIFYYGTGDSWCPQNYYDEIKMDFPDGDIRLCEKGLRHAFVLDASKEMAAMITDWLRDDLTKL.

The active-site Nucleophile is Ser-136. Active-site charge relay system residues include Asp-270 and His-299.

The protein belongs to the AB hydrolase superfamily. LDAH family.

It is found in the lipid droplet. It localises to the endoplasmic reticulum. It carries out the reaction a cholesterol ester + H2O = cholesterol + a fatty acid + H(+). Its function is as follows. Probable serine lipid hydrolase associated with lipid droplets. Has low cholesterol esterase activity. Appears to lack triglyceride lipase activity. Involved in cholesterol and triglyceride homeostasis; stimulates cellular triglyceride accumulation and cellular cholesterol release. This chain is Lipid droplet-associated hydrolase, found in Gallus gallus (Chicken).